The following is a 306-amino-acid chain: 4-hydroxy-3-methylbut-2-enyl diphosphate reductase (306 aa).

Cys12 is a [4Fe-4S] cluster binding site. Positions 41 and 74 each coordinate (2E)-4-hydroxy-3-methylbut-2-enyl diphosphate. Residues His41 and His74 each contribute to the dimethylallyl diphosphate site. Isopentenyl diphosphate contacts are provided by His41 and His74. Residue Cys96 coordinates [4Fe-4S] cluster. His124 is a (2E)-4-hydroxy-3-methylbut-2-enyl diphosphate binding site. His124 lines the dimethylallyl diphosphate pocket. Residue His124 participates in isopentenyl diphosphate binding. Glu126 acts as the Proton donor in catalysis. Position 164 (Thr164) interacts with (2E)-4-hydroxy-3-methylbut-2-enyl diphosphate. A [4Fe-4S] cluster-binding site is contributed by Cys194. Residues Ser222, Ser223, Asn224, and Ser266 each contribute to the (2E)-4-hydroxy-3-methylbut-2-enyl diphosphate site. Residues Ser222, Ser223, Asn224, and Ser266 each contribute to the dimethylallyl diphosphate site. Ser222, Ser223, Asn224, and Ser266 together coordinate isopentenyl diphosphate.

It belongs to the IspH family. [4Fe-4S] cluster serves as cofactor.

It carries out the reaction isopentenyl diphosphate + 2 oxidized [2Fe-2S]-[ferredoxin] + H2O = (2E)-4-hydroxy-3-methylbut-2-enyl diphosphate + 2 reduced [2Fe-2S]-[ferredoxin] + 2 H(+). The catalysed reaction is dimethylallyl diphosphate + 2 oxidized [2Fe-2S]-[ferredoxin] + H2O = (2E)-4-hydroxy-3-methylbut-2-enyl diphosphate + 2 reduced [2Fe-2S]-[ferredoxin] + 2 H(+). Its pathway is isoprenoid biosynthesis; dimethylallyl diphosphate biosynthesis; dimethylallyl diphosphate from (2E)-4-hydroxy-3-methylbutenyl diphosphate: step 1/1. It functions in the pathway isoprenoid biosynthesis; isopentenyl diphosphate biosynthesis via DXP pathway; isopentenyl diphosphate from 1-deoxy-D-xylulose 5-phosphate: step 6/6. Its function is as follows. Catalyzes the conversion of 1-hydroxy-2-methyl-2-(E)-butenyl 4-diphosphate (HMBPP) into a mixture of isopentenyl diphosphate (IPP) and dimethylallyl diphosphate (DMAPP). Acts in the terminal step of the DOXP/MEP pathway for isoprenoid precursor biosynthesis. The sequence is that of 4-hydroxy-3-methylbut-2-enyl diphosphate reductase from Ruthia magnifica subsp. Calyptogena magnifica.